The following is a 374-amino-acid chain: Anthranilate O-methyltransferase 2 (374 aa).

Tyr18 is a binding site for S-adenosyl-L-homocysteine. Gln25 lines the anthranilate pocket. S-adenosyl-L-homocysteine-binding residues include Cys59, Asn64, Asp98, Leu99, Ser142, and Tyr143. Trp164 contributes to the anthranilate binding site. Residues Glu261 and Phe263 each coordinate Mg(2+).

Belongs to the methyltransferase superfamily. Type-7 methyltransferase family. SABATH subfamily.

The catalysed reaction is anthranilate + S-adenosyl-L-methionine = O-methyl anthranilate + S-adenosyl-L-homocysteine. Functionally, methyltransferase involved in the biosynthesis of methyl anthranilate in response to stresses. Utilizes anthranilic acid as substrate. Produces exclusively the O-methyl ester. The protein is Anthranilate O-methyltransferase 2 (AAMT2) of Zea mays (Maize).